Reading from the N-terminus, the 250-residue chain is MAVTKLVLVRHGESQWNNENRFTGWYDVDLSEKGVGEAKAAGKLLKEEGYSFDFAYTSVLKRAIHTLWNVLDELDQAWLPVEKSWKLNERHYGALQGLNKAETAEKYGDEQVKQWRRGFAVTPPELTKDDERYPGHDPRYAQLTEKELPLTESLALTIDRVIPYWNETILPRMKSGERIIIAAHGNSLRALVKYLDNMSEEEILELNIPTGVPLVYEFDENFKPIKHYYLGNADEIAAKAAAVANQGKAK.

Substrate contacts are provided by residues 10–17 (RHGESQWN), 23–24 (TG), R62, 89–92 (ERHY), K100, 116–117 (RR), and 185–186 (GN). H11 (tele-phosphohistidine intermediate) is an active-site residue. The active-site Proton donor/acceptor is the E89.

It belongs to the phosphoglycerate mutase family. BPG-dependent PGAM subfamily. In terms of assembly, homodimer.

The catalysed reaction is (2R)-2-phosphoglycerate = (2R)-3-phosphoglycerate. The protein operates within carbohydrate degradation; glycolysis; pyruvate from D-glyceraldehyde 3-phosphate: step 3/5. In terms of biological role, catalyzes the interconversion of 2-phosphoglycerate and 3-phosphoglycerate. The sequence is that of 2,3-bisphosphoglycerate-dependent phosphoglycerate mutase from Citrobacter koseri (strain ATCC BAA-895 / CDC 4225-83 / SGSC4696).